The sequence spans 20 residues: Cytochrome c oxidase subunit 5A-1, mitochondrial (20 aa).

This sequence belongs to the cytochrome c oxidase subunit 5A family. As to quaternary structure, component of the cytochrome c oxidase (complex IV, CIV), a multisubunit enzyme composed of 14 subunits. The complex is composed of a catalytic core of 3 subunits MT-CO1, MT-CO2 and MT-CO3, encoded in the mitochondrial DNA, and 11 supernumerary subunits COX4I, COX5A, COX5B, COX6A, COX6B, COX6C, COX7A, COX7B, COX7C, COX8 and NDUFA4, which are encoded in the nuclear genome. The complex exists as a monomer or a dimer and forms supercomplexes (SCs) in the inner mitochondrial membrane with NADH-ubiquinone oxidoreductase (complex I, CI) and ubiquinol-cytochrome c oxidoreductase (cytochrome b-c1 complex, complex III, CIII), resulting in different assemblies (supercomplex SCI(1)III(2)IV(1) and megacomplex MCI(2)III(2)IV(2)). Interacts with AFG1L. Interacts with RAB5IF.

It localises to the mitochondrion inner membrane. It participates in energy metabolism; oxidative phosphorylation. Functionally, component of the cytochrome c oxidase, the last enzyme in the mitochondrial electron transport chain which drives oxidative phosphorylation. The respiratory chain contains 3 multisubunit complexes succinate dehydrogenase (complex II, CII), ubiquinol-cytochrome c oxidoreductase (cytochrome b-c1 complex, complex III, CIII) and cytochrome c oxidase (complex IV, CIV), that cooperate to transfer electrons derived from NADH and succinate to molecular oxygen, creating an electrochemical gradient over the inner membrane that drives transmembrane transport and the ATP synthase. Cytochrome c oxidase is the component of the respiratory chain that catalyzes the reduction of oxygen to water. Electrons originating from reduced cytochrome c in the intermembrane space (IMS) are transferred via the dinuclear copper A center (CU(A)) of subunit 2 and heme A of subunit 1 to the active site in subunit 1, a binuclear center (BNC) formed by heme A3 and copper B (CU(B)). The BNC reduces molecular oxygen to 2 water molecules using 4 electrons from cytochrome c in the IMS and 4 protons from the mitochondrial matrix. This Thunnus obesus (Bigeye tuna) protein is Cytochrome c oxidase subunit 5A-1, mitochondrial.